The following is a 493-amino-acid chain: NADH-ubiquinone oxidoreductase 51 kDa subunit, mitochondrial (493 aa).

Residues 1–27 (MLSRTAAPTKASARTLSRAAAEQCRTF) constitute a mitochondrion transit peptide. Position 96-105 (96-105 (GRGGAGFPSG)) interacts with NAD(+). Residue 212-259 (GAGAYVCGEETSLIESLEGKPGKPRLKPPFPAAVGLFGCPSTVANVET) participates in FMN binding. [4Fe-4S] cluster contacts are provided by Cys-391, Cys-394, Cys-397, and Cys-437.

The protein belongs to the complex I 51 kDa subunit family. Complex I is composed of about 40 different subunits. This is a component of the flavoprotein-sulfur (FP) fragment of the enzyme. The cofactor is FMN. It depends on [4Fe-4S] cluster as a cofactor.

It is found in the mitochondrion inner membrane. It carries out the reaction a ubiquinone + NADH + 5 H(+)(in) = a ubiquinol + NAD(+) + 4 H(+)(out). Its function is as follows. Core subunit of the mitochondrial membrane respiratory chain NADH dehydrogenase (Complex I) that is believed to belong to the minimal assembly required for catalysis. Complex I functions in the transfer of electrons from NADH to the respiratory chain. The immediate electron acceptor for the enzyme is believed to be ubiquinone. This Neurospora crassa (strain ATCC 24698 / 74-OR23-1A / CBS 708.71 / DSM 1257 / FGSC 987) protein is NADH-ubiquinone oxidoreductase 51 kDa subunit, mitochondrial (nuo-51).